The following is a 207-amino-acid chain: Transcriptional regulatory protein RcsA (207 aa).

Positions Ile-131 to Asp-196 constitute an HTH luxR-type domain. Positions Thr-155–Gly-174 form a DNA-binding region, H-T-H motif.

This sequence belongs to the RcsA family. As to quaternary structure, interacts with RcsB.

Functionally, component of the Rcs signaling system, which controls transcription of numerous genes. Binds, with RcsB, to the RcsAB box to regulate expression of genes. This chain is Transcriptional regulatory protein RcsA, found in Salmonella typhimurium (strain LT2 / SGSC1412 / ATCC 700720).